The chain runs to 413 residues: Paxillin homolog 1 (413 aa).

Residues 33–45 (HISDRRSQSRDDF) show a composition bias toward basic and acidic residues. The segment at 33-157 (HISDRRSQSR…PLHSDSMIGT (125 aa)) is disordered. Residues 49 to 69 (YDLQGNLNTQSVSNGNITTSP) are compositionally biased toward polar residues. A compositionally biased stretch (basic and acidic residues) spans 73 to 92 (RSSEGKDYSKSQERIYENES). Positions 118–143 (ASSSRKSLGPPSQAQSYSDVRSNGRS) are enriched in polar residues. 4 LIM zinc-binding domains span residues 174–232 (GDCA…NQFS), 233–292 (PKCQ…LFAP), 293–350 (KCNG…ESRG), and 351–410 (SICS…TYAL).

It belongs to the paxillin family. In terms of tissue distribution, isoform a: Expressed in all 95 body wall muscle cells as well as in the pharyngeal muscle cells (at protein level). Isoform c: Expressed in the body wall muscle cells and in the pharyngeal muscle cells.

Its subcellular location is the cell junction. It localises to the adherens junction. It is found in the cell membrane. The protein localises to the cytoplasm. The protein resides in the myofibril. Its subcellular location is the sarcomere. It localises to the m line. It is found in the cell projection. The protein localises to the podosome. In terms of biological role, required for myofilament organization of the pharyngeal sarcomeres and for pharyngeal muscle contractions and hence for pharyngeal pumping. Together with lin-8, might be required for myofilament organization in the body wall muscles. The polypeptide is Paxillin homolog 1 (pxl-1) (Caenorhabditis elegans).